The primary structure comprises 599 residues: Protein linkin (599 aa).

An N-terminal signal peptide occupies residues Met-1–Ser-19. The Extracellular portion of the chain corresponds to Leu-20–Leu-553. Residues Asn-50, Asn-117, Asn-163, Asn-361, and Asn-378 are each glycosylated (N-linked (GlcNAc...) asparagine). A helical membrane pass occupies residues Ile-554 to Phe-574. Residues Leu-575–Met-599 lie on the Cytoplasmic side of the membrane.

This sequence belongs to the TIP family. In terms of tissue distribution, expressed in all somatic gonadal cells including distal tip cells, anchor cell, uterine precursor cells and spermatheca precursor cells of the hermaphrodite. Also expressed in the pharynx, pharyngeal-intestinal valve, intestine, excretory cell and canal, seam cells, a subset of hypodermal cells, vulval precursor cells of the hermaphrodite and hook precursor cells in the male.

Its subcellular location is the apical cell membrane. The protein resides in the lateral cell membrane. In terms of biological role, probable cell adhesion protein involved in gonadal cell migration. This Caenorhabditis elegans protein is Protein linkin.